The primary structure comprises 316 residues: 4-hydroxy-3-methylbut-2-enyl diphosphate reductase (316 aa).

Cysteine 12 contributes to the [4Fe-4S] cluster binding site. 2 residues coordinate (2E)-4-hydroxy-3-methylbut-2-enyl diphosphate: histidine 41 and histidine 74. Dimethylallyl diphosphate-binding residues include histidine 41 and histidine 74. 2 residues coordinate isopentenyl diphosphate: histidine 41 and histidine 74. Cysteine 96 provides a ligand contact to [4Fe-4S] cluster. Histidine 124 contributes to the (2E)-4-hydroxy-3-methylbut-2-enyl diphosphate binding site. Histidine 124 lines the dimethylallyl diphosphate pocket. Histidine 124 lines the isopentenyl diphosphate pocket. Glutamate 126 (proton donor) is an active-site residue. Threonine 168 serves as a coordination point for (2E)-4-hydroxy-3-methylbut-2-enyl diphosphate. Cysteine 198 lines the [4Fe-4S] cluster pocket. (2E)-4-hydroxy-3-methylbut-2-enyl diphosphate-binding residues include serine 226, serine 227, asparagine 228, and serine 270. Dimethylallyl diphosphate is bound by residues serine 226, serine 227, asparagine 228, and serine 270. Isopentenyl diphosphate is bound by residues serine 226, serine 227, asparagine 228, and serine 270.

It belongs to the IspH family. Requires [4Fe-4S] cluster as cofactor.

It carries out the reaction isopentenyl diphosphate + 2 oxidized [2Fe-2S]-[ferredoxin] + H2O = (2E)-4-hydroxy-3-methylbut-2-enyl diphosphate + 2 reduced [2Fe-2S]-[ferredoxin] + 2 H(+). The catalysed reaction is dimethylallyl diphosphate + 2 oxidized [2Fe-2S]-[ferredoxin] + H2O = (2E)-4-hydroxy-3-methylbut-2-enyl diphosphate + 2 reduced [2Fe-2S]-[ferredoxin] + 2 H(+). The protein operates within isoprenoid biosynthesis; dimethylallyl diphosphate biosynthesis; dimethylallyl diphosphate from (2E)-4-hydroxy-3-methylbutenyl diphosphate: step 1/1. It participates in isoprenoid biosynthesis; isopentenyl diphosphate biosynthesis via DXP pathway; isopentenyl diphosphate from 1-deoxy-D-xylulose 5-phosphate: step 6/6. Catalyzes the conversion of 1-hydroxy-2-methyl-2-(E)-butenyl 4-diphosphate (HMBPP) into a mixture of isopentenyl diphosphate (IPP) and dimethylallyl diphosphate (DMAPP). Acts in the terminal step of the DOXP/MEP pathway for isoprenoid precursor biosynthesis. The chain is 4-hydroxy-3-methylbut-2-enyl diphosphate reductase from Acinetobacter baylyi (strain ATCC 33305 / BD413 / ADP1).